Consider the following 414-residue polypeptide: Putative ankyrin repeat protein BB_B28 (414 aa).

ANK repeat units lie at residues Asn-326–Leu-355 and Asn-359–Ile-389.

In Borreliella burgdorferi (strain ATCC 35210 / DSM 4680 / CIP 102532 / B31) (Borrelia burgdorferi), this protein is Putative ankyrin repeat protein BB_B28.